Here is a 368-residue protein sequence, read N- to C-terminus: DNA-dependent metalloprotease dvc-1 (368 aa).

Residues 21 to 190 (HALFIQFDAR…QSCGGNFLKV (170 aa)) enclose the SprT-like domain. Zn(2+) is bound at residue histidine 89. The active site involves glutamate 90. Zn(2+) is bound by residues histidine 93 and histidine 108. Residues 187–309 (FLKVKEPEGY…PVNFTSPSSA (123 aa)) are disordered. Positions 226–237 (TLDDFFKKDGKN) are enriched in basic and acidic residues. The segment covering 238-274 (SSDNSTSKSPTKPSTSLFTGSGQKLGGSSSTSSLLNS) has biased composition (low complexity). A UBZ4-type zinc finger spans residues 344–368 (SVICPSCNTEVMENLIHGHLDYCLG). Positions 347, 350, 362, and 366 each coordinate Zn(2+).

Belongs to the Spartan family. In terms of assembly, interacts with vcp/p97 (cdc-48.1 or cdc-48.2).

Its subcellular location is the nucleus. The protein localises to the chromosome. In terms of biological role, DNA-dependent metalloendopeptidase that mediates the proteolytic cleavage of covalent DNA-protein cross-links (DPCs) during DNA synthesis, thereby playing a key role in maintaining genomic integrity. DPCs are highly toxic DNA lesions that interfere with essential chromatin transactions, such as replication and transcription, and which are induced by reactive agents, such as UV light or formaldehyde. Associates with the DNA replication machinery and specifically removes DPCs during DNA synthesis. Regulator of UV-induced DNA damage response: required to protect genome stability during DNA replication, possibly via recruitment of vcp/p97 (cdc-48.1 or cdc-48.2) recruitment. This chain is DNA-dependent metalloprotease dvc-1, found in Caenorhabditis elegans.